A 1649-amino-acid polypeptide reads, in one-letter code: eIF-2-alpha kinase GCN2 (1649 aa).

Disordered regions lie at residues 1–25 (MAGG…RQDH), 138–158 (NKPP…QEEQ), and 227–256 (HGGS…YSVC). The region spanning 25–137 (HELQALEAIY…YHVQSFLSEH (113 aa)) is the RWD domain. Positions 146-205 (HEEMLERRAQEEQQRLLEAKRKEEQEQREILHEIQRRKEEIKEEKKRKEMAKQERLEIAS) form a coiled coil. Serine 230 carries the post-translational modification Phosphoserine. The segment covering 237–249 (GKHRANSSGRSRR) has biased composition (basic residues). Protein kinase domains are found at residues 296 to 539 (VYNA…HSFI) and 590 to 1001 (FEEL…SELL). ATP contacts are provided by residues 596 to 604 (LGKGAFGAV) and lysine 619. 2 disordered regions span residues 660 to 750 (ERPA…QSFL) and 766 to 788 (ENSK…ESEP). Residue threonine 667 is modified to Phosphothreonine. The span at 705–717 (LSSSVEWSTSGER) shows a compositional bias: polar residues. Residues 731–740 (SDDEDDDEDE) are compositionally biased toward acidic residues. Positions 778–787 (NEKNGCHESE) are enriched in basic and acidic residues. Residue aspartate 848 is the Proton acceptor of the active site. Position 871 is a phosphothreonine (threonine 871). A phosphothreonine; by autocatalysis mark is found at threonine 899 and threonine 904. Residues 1022–1493 (VDGKAYRTMM…DHVLQKLRTK (472 aa)) are histidyl-tRNA synthetase-like. Position 1259 is an N6-acetyllysine (lysine 1259).

This sequence belongs to the protein kinase superfamily. Ser/Thr protein kinase family. GCN2 subfamily. In terms of assembly, homodimer; homodimerization is important for kinase activation by uncharged tRNAs. Interacts with GCN1; this interaction stimulates EIF2AK4/GCN2 kinase activity and is impaired by IMPACT upon a variety of stress conditions, such as amino acid depletion, UV-C irradiation, proteasome inhibitor treatment and glucose deprivation. Interacts with DNAJC3; this interaction inhibits EIF2AK4/GCN2 kinase activity during endoplasmic reticulum (ER), hypothermic and amino acid-starving stress conditions. Interacts with MAP3K20; activates EIF2AK4/GCN2 kinase activity in response to moderate ribotoxic stress. As to quaternary structure, (Microbial infection) Interacts with hepatitis E virus (HEV) ORF1 protease; this interaction inhibits dimerization of EIF2AK4 and prevents EIF2AK4-mediated phosphorylation of EIF2A. Autophosphorylated; autophosphorylation on Thr-899 is increased upon amino acid starvation and in UV irradiation cells and inhibited in presence of IMPACT. As to expression, widely expressed. Expressed in lung, smooth muscle cells and macrophages.

The protein localises to the cytoplasm. It carries out the reaction L-seryl-[protein] + ATP = O-phospho-L-seryl-[protein] + ADP + H(+). The enzyme catalyses L-threonyl-[protein] + ATP = O-phospho-L-threonyl-[protein] + ADP + H(+). In terms of biological role, metabolic-stress sensing protein kinase that phosphorylates the alpha subunit of eukaryotic translation initiation factor 2 (EIF2S1/eIF-2-alpha) in response to low amino acid availability. Plays a role as an activator of the integrated stress response (ISR) required for adaptation to amino acid starvation. EIF2S1/eIF-2-alpha phosphorylation in response to stress converts EIF2S1/eIF-2-alpha into a global protein synthesis inhibitor, leading to a global attenuation of cap-dependent translation, and thus to a reduced overall utilization of amino acids, while concomitantly initiating the preferential translation of ISR-specific mRNAs, such as the transcriptional activator ATF4, and hence allowing ATF4-mediated reprogramming of amino acid biosynthetic gene expression to alleviate nutrient depletion. Binds uncharged tRNAs. Required for the translational induction of protein kinase PRKCH following amino acid starvation. Involved in cell cycle arrest by promoting cyclin D1 mRNA translation repression after the unfolded protein response pathway (UPR) activation or cell cycle inhibitor CDKN1A/p21 mRNA translation activation in response to amino acid deprivation. Plays a role in the consolidation of synaptic plasticity, learning as well as formation of long-term memory. Plays a role in neurite outgrowth inhibition. Plays a proapoptotic role in response to glucose deprivation. Promotes global cellular protein synthesis repression in response to UV irradiation independently of the stress-activated protein kinase/c-Jun N-terminal kinase (SAPK/JNK) and p38 MAPK signaling pathways. Plays a role in the antiviral response against alphavirus infection; impairs early viral mRNA translation of the incoming genomic virus RNA, thus preventing alphavirus replication. Its function is as follows. (Microbial infection) Plays a role in modulating the adaptive immune response to yellow fever virus infection; promotes dendritic cells to initiate autophagy and antigene presentation to both CD4(+) and CD8(+) T-cells under amino acid starvation. The polypeptide is eIF-2-alpha kinase GCN2 (Homo sapiens (Human)).